A 949-amino-acid chain; its full sequence is Valine--tRNA ligase (949 aa).

The short motif at 45 to 55 (PNVTGVLHMGH) is the 'HIGH' region element. The 'KMSKS' region signature appears at 561–565 (KMSKS). Lysine 564 contributes to the ATP binding site. A coiled-coil region spans residues 882–949 (EELLKQEKTR…EIKEKLMTLP (68 aa)).

Belongs to the class-I aminoacyl-tRNA synthetase family. ValS type 1 subfamily. Monomer.

It is found in the cytoplasm. It catalyses the reaction tRNA(Val) + L-valine + ATP = L-valyl-tRNA(Val) + AMP + diphosphate. Functionally, catalyzes the attachment of valine to tRNA(Val). As ValRS can inadvertently accommodate and process structurally similar amino acids such as threonine, to avoid such errors, it has a 'posttransfer' editing activity that hydrolyzes mischarged Thr-tRNA(Val) in a tRNA-dependent manner. This is Valine--tRNA ligase from Protochlamydia amoebophila (strain UWE25).